The following is a 465-amino-acid chain: MFIYDTKSKQKVPFEPLVEKKANIYVCGPTVYDDAHLGHARSAIAFDLLRRTLELSGYEVMLVRNFTDIDDKIINKAFKENKSIQELSSVYIESYTRDLNALNVKKPSLEPKASEYLDAMVRMIETLLEKNIAYRVSNGDIYLDTTKDKDYGSLSVHNSSMEFSRIGLVQEKRLEQDFVLWKSYKGDNDVGFDSPLGKGRPGWHIECSSMVFETLALANAPYQIDIHAGGADLLFPHHENEACQTRCAFGVELAKYWMHNGFVNINNEKMSKSLGNSFFIKDALKNYDGEILRNYLLGVHYRSVLNFNEEDLLVSKKRLDKIYRLKQRVSGTLGGINPNFKKEILECMQDDLNVSKALSVLESMLSSTNEKLDQNPKNKALKGEILANLKFIEELLGIGFKDPSAYFQLGVSESEKQEIENKIEERKRAKEQKDFLKADSIREELLNHKIALMDTPQGTIWEKLF.

Cys-27 is a binding site for Zn(2+). Positions 29–39 (PTVYDDAHLGH) match the 'HIGH' region motif. Zn(2+) contacts are provided by Cys-207, His-237, and Glu-241. Residues 269–273 (KMSKS) carry the 'KMSKS' region motif. Lys-272 is a binding site for ATP.

This sequence belongs to the class-I aminoacyl-tRNA synthetase family. In terms of assembly, monomer. The cofactor is Zn(2+).

The protein resides in the cytoplasm. The catalysed reaction is tRNA(Cys) + L-cysteine + ATP = L-cysteinyl-tRNA(Cys) + AMP + diphosphate. This is Cysteine--tRNA ligase from Helicobacter pylori (strain G27).